We begin with the raw amino-acid sequence, 389 residues long: Ethanolamine-phosphate cytidylyltransferase (389 aa).

CTP contacts are provided by residues 221 to 222 (AF), 229 to 232 (HVDF), Lys-259, 307 to 310 (HGKT), and 336 to 340 (SGNDL). Residues Thr-341 and Thr-342 each carry the phosphothreonine modification.

This sequence belongs to the cytidylyltransferase family.

The catalysed reaction is phosphoethanolamine + CTP + H(+) = CDP-ethanolamine + diphosphate. Its pathway is phospholipid metabolism; phosphatidylethanolamine biosynthesis; phosphatidylethanolamine from ethanolamine: step 2/3. Functionally, ethanolamine-phosphate cytidylyltransferase that catalyzes the second step in the synthesis of phosphatidylethanolamine (PE) from ethanolamine via the CDP-ethanolamine pathway. Phosphatidylethanolamine is a dominant inner-leaflet phospholipid in cell membranes, where it plays a role in membrane function by structurally stabilizing membrane-anchored proteins, and participates in important cellular processes such as cell division, cell fusion, blood coagulation, and apoptosis. This Bos taurus (Bovine) protein is Ethanolamine-phosphate cytidylyltransferase (PCYT2).